A 732-amino-acid chain; its full sequence is MADKITDEYAVGIDPEIYANNPAYSSLFNPYIHKQTIIADHVSVQCHIDLNGIDAVGSKFGNLNAHAGNFTSLCAPNCLPERFALVAYTVEYAFLHDALNQSGMTSVSTRVSDKAQRKSEVQAKIAAEYLRLDPVFGEWFLNKWQTFTACVKDVRSLEFPSLDDYLEFRIVDAAADWTLYNFRWGSGITLTPEEEKIADPMSYVAYAELCLVNDLFSWDKEYASHIKSNGDVPLVNAVHIVAVTQGLTHCAAKAVVQAEVRAHEERFCQLKEQYEATDKPSHEVLRWLRLLEHSMAGNWVWSLCVPRYCKVDRNPYKDHLEKYGSDAVRVLTPLDRLCWPKQEIKDMKQSELKDPSSSTYKSHFSPLEPNPGPEQMRLTISQTQQQRPVLNPYTYINSLPSKNVRQTLIAALNSWYKVPVKSLLIIEGAVNFLHNSSLLLDDIQDGSFLRRGRPVAHQIFGVGQTINTATYLMNEALYLIQMLSPSAVSVYTEIDEMRNLQLGQGRDLYWSYHTHVPTPAQYISMVDGKTGGLFRLISRLMRSEATKNSDLDISQFATLLGRHFQIRDDYQNLQSEDYTKNKGFCDDLDEGKLSFPIILSMQSPGFSNTALSSVFKGSQKGQTLSLEMKQYMLEEITARGAFSETKAVLRKLHTELLRLLIETEKKAGGVENWALRLLIMKLDIAEEKKVAPPKSDSHWGVNQRRAWKGCQKNGRPIDKACFLRAMEETLQK.

Residues 1–311 form a terpene cyclase region; it reads MADKITDEYA…SLCVPRYCKV (311 aa). Aspartate 97 provides a ligand contact to Mg(2+). Substrate is bound by residues aspartate 97, 169–172, asparagine 213, 217–221, and 307–308; these read RIVD, SWDKE, and RY. Residues 97–101 carry the DDXXD 1 motif; sequence DALNQ. The NSE/DTE motif lies at 213-221; that stretch reads NDLFSWDKE. The segment at 312–732 is prenyltransferase; the sequence is DRNPYKDHLE…LRAMEETLQK (421 aa). The segment at 348–370 is disordered; sequence KQSELKDPSSSTYKSHFSPLEPN. Residues lysine 402, arginine 405, and histidine 434 each coordinate isopentenyl diphosphate. 2 residues coordinate Mg(2+): aspartate 441 and aspartate 445. The DDXXD 2 signature appears at 441–445; sequence DDIQD. Arginine 450 contributes to the dimethylallyl diphosphate binding site. Arginine 451 is an isopentenyl diphosphate binding site. Residues lysine 529, threonine 530, glutamine 565, asparagine 572, lysine 582, and lysine 592 each contribute to the dimethylallyl diphosphate site.

This sequence in the N-terminal section; belongs to the terpene synthase family. In the C-terminal section; belongs to the FPP/GGPP synthase family. Hexamer. It depends on Mg(2+) as a cofactor.

It catalyses the reaction isopentenyl diphosphate + (2E,6E)-farnesyl diphosphate = (2E,6E,10E)-geranylgeranyl diphosphate + diphosphate. The protein operates within secondary metabolite biosynthesis; terpenoid biosynthesis. Its function is as follows. Bifunctional terpene synthase; part of the gene cluster that mediates the biosynthesis of conidiogenone, a diterpene known to induce the conidiation. The bifunctional terpene synthase PchDS converts isopentenyl diphosphate (IPP) and dimethylallyl diphosphate (DMAPP) into deoxyconidiogenol. The C-terminal prenyltransferase (PT) domain of PchDS catalyzes formation of GGPP, whereas the N-terminal terpene cyclase (TC) domain catalyzes the cyclization of GGPP into deoxyconidiogenol. The cytochrome P450 monooxygenase PchP450 then catalyzes two rounds of oxidation to furnish conidiogenone. In Penicillium rubens (strain ATCC 28089 / DSM 1075 / NRRL 1951 / Wisconsin 54-1255) (Penicillium chrysogenum), this protein is Conidiogenone synthase.